Reading from the N-terminus, the 420-residue chain is Reticulon-4 receptor-like 2 (420 aa).

A signal peptide spans 1 to 30; sequence MLPGLRRLLQGPASACLLLTLLALPPVTPS. 2 disulfide bridges follow: cysteine 31-cysteine 37 and cysteine 35-cysteine 46. The region spanning 31-60 is the LRRNT domain; it reads CPMLCTCYSSPPTVSCQANNFSSVPLSLPP. Asparagine 50 is a glycosylation site (N-linked (GlcNAc...) asparagine). LRR repeat units lie at residues 61–82, 83–104, 107–129, 132–153, 156–177, 180–201, 204–225, and 228–249; these read STQR…TFGP, NLLT…TFRH, ALEE…TFQG, RLQS…IFRG, SLQY…LFAD, NLSH…VFRG, SLDR…AFHG, and RLTI…ALAD. A glycan (N-linked (GlcNAc...) asparagine) is linked at asparagine 93. Asparagine 236 is a glycosylation site (N-linked (GlcNAc...) asparagine). In terms of domain architecture, LRRCT spans 261-312; it reads NPWACDCRARPLWAWFQRARVSSSDVTCATPPERQGRDLRTLRDTDFQACPP. Disulfide bonds link cysteine 265–cysteine 288 and cysteine 267–cysteine 310. Residues 286–390 form a disordered region; the sequence is VTCATPPERQ…GEQTCPGAAC (105 aa). A compositionally biased stretch (basic and acidic residues) spans 294-306; the sequence is RQGRDLRTLRDTD. Residues 315-327 form an important for interaction with MAG region; sequence PTRPGSRARGNSS. Residues 351–360 are compositionally biased toward basic and acidic residues; it reads LPAEDSRGRQ. Residue cysteine 390 is the site of GPI-anchor amidated cysteine attachment. Residues 391-420 constitute a propeptide, removed in mature form; it reads QAPADSRGPVLSAGLRTPLLCLLLLAPHHL.

Belongs to the Nogo receptor family. In terms of assembly, interaction with MAG is controversial, and may be indirect. Interacts with MAG. Does not interact with OMG and RTN4. In terms of processing, undergoes zinc metalloproteinase-mediated ectodomain shedding in neuroblastoma cells; is released both as a full-length ectodomain and an N-terminal fragment containing the leucine-rich repeat (LRR) region of the protein. N-glycosylated. O-glycosylated. Contains terminal sialic acid groups on its glycan chains. As to expression, detected in adult brain, in neocortex, hippocampus, striatum and dorsal root ganglion neurons, and in retina (at protein level). In brain, detected in cerebral cortex and hippocampus. Weak or no expression detected in the cerebellum, thalamus or striatum.

The protein resides in the cell membrane. Its subcellular location is the cell projection. The protein localises to the dendrite. It localises to the perikaryon. It is found in the axon. The protein resides in the membrane raft. Cell surface receptor that plays a functionally redundant role in the inhibition of neurite outgrowth mediated by MAG. Plays a functionally redundant role in postnatal brain development. Contributes to normal axon migration across the brain midline and normal formation of the corpus callosum. Does not seem to play a significant role in regulating axon regeneration in the adult central nervous system. Protects motoneurons against apoptosis; protection against apoptosis is probably mediated by MAG. Like other family members, plays a role in restricting the number dendritic spines and the number of synapses that are formed during brain development. Signaling mediates activation of Rho and downstream reorganization of the actin cytoskeleton. The sequence is that of Reticulon-4 receptor-like 2 from Rattus norvegicus (Rat).